A 435-amino-acid chain; its full sequence is N-lysine methyltransferase SMYD2-A (435 aa).

In terms of domain architecture, SET spans 7–241; that stretch reads EGTERFLSPG…PEEEIFNSYI (235 aa). Residue 17–19 coordinates S-adenosyl-L-methionine; that stretch reads KGR. Zn(2+) is bound by residues Cys-52, Cys-55, Cys-65, Cys-68, Cys-74, Cys-78, His-86, and Cys-90. The segment at 52-90 adopts an MYND-type zinc-finger fold; sequence CECCFTRKEGLSKCGKCKQAYYCNVECQRGDWPMHKLEC. Residues His-137, 206 to 207, and 258 to 260 contribute to the S-adenosyl-L-methionine site; these read NH and YFF.

This sequence belongs to the class V-like SAM-binding methyltransferase superfamily.

The protein localises to the cytoplasm. Its subcellular location is the cytosol. It localises to the nucleus. It carries out the reaction L-lysyl(4)-[histone H3] + 3 S-adenosyl-L-methionine = N(6),N(6),N(6)-trimethyl-L-lysyl(4)-[histone H3] + 3 S-adenosyl-L-homocysteine + 3 H(+). The catalysed reaction is L-lysyl-[protein] + S-adenosyl-L-methionine = N(6)-methyl-L-lysyl-[protein] + S-adenosyl-L-homocysteine + H(+). Its function is as follows. Protein-lysine N-methyltransferase that methylates both histones and non-histone proteins, including p53/TP53 and RB1. Specifically trimethylates histone H3 'Lys-4' (H3K4me3) in vivo. The activity requires interaction with HSP90alpha. Shows even higher methyltransferase activity on p53/TP53. Monomethylates 'Lys-370' of p53/TP53, leading to decreased DNA-binding activity and subsequent transcriptional regulation activity of p53/TP53. Monomethylates RB1 at 'Lys-860'. In Danio rerio (Zebrafish), this protein is N-lysine methyltransferase SMYD2-A (smyd2a).